Reading from the N-terminus, the 60-residue chain is Cecropin-B1 (60 aa).

A signal peptide spans 1–24 (MNFSKVFALVLLIGLVLLTGHTEA).

It belongs to the cecropin family.

The protein localises to the secreted. In terms of biological role, putative antimicrobial peptide. Partially neutralizes lipopolysaccharides (LPS). Exhibits anti-inflammatory properties: inhibits LPS-induced iNOS/NOS2 transcription, nitric oxide (NO) and pro-inflammatory cytokine production in mouse macrophages and human peripheral blood mononuclear cells (PBMCs); inhibits LPS-induced activation of MAPK and NF-kappa-B signaling pathways in mouse macrophages. This Aedes aegypti (Yellowfever mosquito) protein is Cecropin-B1.